The primary structure comprises 157 residues: Ribosome maturation factor RimP (157 aa).

Belongs to the RimP family.

The protein localises to the cytoplasm. Functionally, required for maturation of 30S ribosomal subunits. This chain is Ribosome maturation factor RimP, found in Bacillus licheniformis (strain ATCC 14580 / DSM 13 / JCM 2505 / CCUG 7422 / NBRC 12200 / NCIMB 9375 / NCTC 10341 / NRRL NRS-1264 / Gibson 46).